A 308-amino-acid polypeptide reads, in one-letter code: Cytochrome c biogenesis protein CcsA (308 aa).

Transmembrane regions (helical) follow at residues 2-22 (IVST…SILI), 44-64 (GMLI…IYLG), 71-91 (LSES…IGYF), 143-163 (MILG…LMVI), 212-232 (VISL…VWAN), 247-267 (WAFI…NINL), and 273-293 (AIVA…VNLV).

This sequence belongs to the CcmF/CycK/Ccl1/NrfE/CcsA family. In terms of assembly, may interact with Ccs1.

It localises to the plastid membrane. Functionally, required during biogenesis of c-type cytochromes (cytochrome c6 and cytochrome f) at the step of heme attachment. This Cuscuta reflexa (Southern Asian dodder) protein is Cytochrome c biogenesis protein CcsA.